We begin with the raw amino-acid sequence, 255 residues long: Putative oxidoreductase YtkK (255 aa).

7-14 (TAGSKGLG) is a binding site for NAD(+).

This sequence belongs to the short-chain dehydrogenases/reductases (SDR) family.

In Bacillus subtilis (strain 168), this protein is Putative oxidoreductase YtkK (ytkK).